Consider the following 225-residue polypeptide: UPF0173 metal-dependent hydrolase Tneu_1348 (225 aa).

This sequence belongs to the UPF0173 family.

This is UPF0173 metal-dependent hydrolase Tneu_1348 from Pyrobaculum neutrophilum (strain DSM 2338 / JCM 9278 / NBRC 100436 / V24Sta) (Thermoproteus neutrophilus).